Reading from the N-terminus, the 176-residue chain is Vitamin K epoxide reductase complex subunit 1-like protein 1 (176 aa).

The Cytoplasmic segment spans residues 1-13 (MAAPVLLRVSVPR). Residues 14–36 (WERVARYAVCAAGILLSIYAYHV) form a helical membrane-spanning segment. Residues 37-87 (EREKERDPEHRALCDLGPWVKCSAALASRWGRGFGLLGSIFGKDGVLNQPN) are Lumenal-facing. Cysteine 50 and cysteine 58 are disulfide-bonded. (S)-warfarin is bound at residue asparagine 87. Residues 88 to 102 (SVFGLIFYILQLLLG) traverse the membrane as a helical segment. Residues 103-107 (MTASA) lie on the Cytoplasmic side of the membrane. Residues 108–135 (VAALVLMTSSIVSVVGSLYLAYILYFVL) traverse the membrane as a helical segment. The Lumenal portion of the chain corresponds to 136-138 (KEF). Cysteine 139 and cysteine 142 are disulfide-bonded. Residues 139–160 (CIICVTTYVLNFLLLIINYKRL) form a helical membrane-spanning segment. Phylloquinone is bound by residues cysteine 142 and tyrosine 146. Tyrosine 146 is a binding site for (S)-warfarin. Topologically, residues 161 to 176 (VYLNEAWKRQLQPKED) are cytoplasmic.

This sequence belongs to the VKOR family. As to expression, detected in testis and lung.

It localises to the endoplasmic reticulum membrane. It carries out the reaction phylloquinone + [protein]-disulfide + H2O = 2,3-epoxyphylloquinone + [protein]-dithiol. The catalysed reaction is phylloquinol + [protein]-disulfide = phylloquinone + [protein]-dithiol. Its activity is regulated as follows. Inhibited by warfarin (coumadin). Warfarin locks VKORC1 in both redox states into the closed conformation. Its function is as follows. Involved in vitamin K metabolism. Can reduce inactive vitamin K 2,3-epoxide to active vitamin K, and may contribute to vitamin K-mediated protection against oxidative stress. Plays a role in vitamin K-dependent gamma-carboxylation of Glu residues in target proteins. This is Vitamin K epoxide reductase complex subunit 1-like protein 1 (Vkorc1l1) from Mus musculus (Mouse).